The sequence spans 506 residues: Histidine ammonia-lyase (506 aa).

The segment at residues 143–145 is a cross-link (5-imidazolinone (Ala-Gly)); the sequence is ASG. A 2,3-didehydroalanine (Ser) modification is found at Ser144.

The protein belongs to the PAL/histidase family. Post-translationally, contains an active site 4-methylidene-imidazol-5-one (MIO), which is formed autocatalytically by cyclization and dehydration of residues Ala-Ser-Gly.

It is found in the cytoplasm. It carries out the reaction L-histidine = trans-urocanate + NH4(+). It functions in the pathway amino-acid degradation; L-histidine degradation into L-glutamate; N-formimidoyl-L-glutamate from L-histidine: step 1/3. This Salmonella schwarzengrund (strain CVM19633) protein is Histidine ammonia-lyase.